The following is a 109-amino-acid chain: Nucleoid-associated protein VP2178 (109 aa).

Disordered stretches follow at residues 1–22 (MFGK…ERMQ) and 88–109 (QKEK…KMPF).

The protein belongs to the YbaB/EbfC family. As to quaternary structure, homodimer.

The protein localises to the cytoplasm. It is found in the nucleoid. Binds to DNA and alters its conformation. May be involved in regulation of gene expression, nucleoid organization and DNA protection. This is Nucleoid-associated protein VP2178 from Vibrio parahaemolyticus serotype O3:K6 (strain RIMD 2210633).